Reading from the N-terminus, the 552-residue chain is MTDRFRITLAQLNPTVGALAANAEKAMAAWQAGRAAGADLVALPEMFLTGYQTQDLVLKPAFLRDAMAAMAALAAQVVDGPALGIGGPYVDETGSYNAWWVLKDGRVIARALKHHLPHDDVFDEMRLFDQGPVSDPLRLGPVALGVPVCEDAWHPDVAGALAAAGAEVLMVPNGSPYRRGKLDLRRQVTGARVAETGLPLLYLNMVGGQDDQLFDGASFVLNPDGSVAVQLPAFEEAVVHVDLERGAADWRAVPADIVAPPGDIEQDYRAMVLGLQDYLRKSGFSRVVLGLSGGIDSALVAVIAADALGAGNVHCVMLPSRYTSQGSLDDAADLARRLGARLDTVEIEGPRAAVEGALAHVLAGTAPDVTEENIQSRLRGVILMAISNKFGAMLLTTGNKSEVAVGYCTIYGDMAGGYNPLKDLYKTRVFETCRWRNATHRPWMQAPAGEIIPVAIIDKPPSAELRENQTDQDSLPPYEVLDAILERLVEGDQSVDQIVAAGFDRATVKRIEHLLYISEWKRFQSAPGPRLTTRAFWLDRRYPMVNRWRDQS.

Positions 5-245 (FRITLAQLNP…EAVVHVDLER (241 aa)) constitute a CN hydrolase domain. Glu-45 acts as the Proton acceptor; for glutaminase activity in catalysis. Lys-113 serves as the catalytic For glutaminase activity. Residue Cys-149 is the Nucleophile; for glutaminase activity of the active site. Positions 175 and 181 each coordinate L-glutamine. Residues 275–552 (LQDYLRKSGF…PMVNRWRDQS (278 aa)) form a ligase region. 290–297 (GLSGGIDS) serves as a coordination point for ATP. A deamido-NAD(+)-binding site is contributed by Asn-373. Thr-397 is an ATP binding site. Deamido-NAD(+) contacts are provided by Glu-402 and Lys-521.

In the C-terminal section; belongs to the NAD synthetase family.

It catalyses the reaction deamido-NAD(+) + L-glutamine + ATP + H2O = L-glutamate + AMP + diphosphate + NAD(+) + H(+). It functions in the pathway cofactor biosynthesis; NAD(+) biosynthesis; NAD(+) from deamido-NAD(+) (L-Gln route): step 1/1. Its function is as follows. Catalyzes the ATP-dependent amidation of deamido-NAD to form NAD. Uses L-glutamine as a nitrogen source. The protein is Glutamine-dependent NAD(+) synthetase of Rhodobacter capsulatus (Rhodopseudomonas capsulata).